Consider the following 484-residue polypeptide: Chromosomal replication initiator protein DnaA (484 aa).

A domain I, interacts with DnaA modulators region spans residues 1 to 73 (MQEGKNIWSL…EILIEKGHST (73 aa)). The tract at residues 73-140 (TINVEFIHSQ…EEIHIKYRNP (68 aa)) is domain II. Positions 141–357 (FLKKKYTFEN…AAVTKLKAHI (217 aa)) are domain III, AAA+ region. Positions 185, 187, 188, and 189 each coordinate ATP. Positions 358 to 484 (DLEDIEIDTN…IELMNKINKN (127 aa)) are domain IV, binds dsDNA.

It belongs to the DnaA family. As to quaternary structure, oligomerizes as a right-handed, spiral filament on DNA at oriC.

The protein resides in the cytoplasm. In terms of biological role, plays an essential role in the initiation and regulation of chromosomal replication. ATP-DnaA binds to the origin of replication (oriC) to initiate formation of the DNA replication initiation complex once per cell cycle. Binds the DnaA box (a 9 base pair repeat at the origin) and separates the double-stranded (ds)DNA. Forms a right-handed helical filament on oriC DNA; dsDNA binds to the exterior of the filament while single-stranded (ss)DNA is stabiized in the filament's interior. The ATP-DnaA-oriC complex binds and stabilizes one strand of the AT-rich DNA unwinding element (DUE), permitting loading of DNA polymerase. After initiation quickly degrades to an ADP-DnaA complex that is not apt for DNA replication. Binds acidic phospholipids. The protein is Chromosomal replication initiator protein DnaA of Borrelia duttonii (strain Ly).